The following is a 398-amino-acid chain: CCA-adding enzyme (398 aa).

ATP is bound by residues Gly32 and Arg35. CTP contacts are provided by Gly32 and Arg35. The Mg(2+) site is built by Asp45 and Asp47. ATP-binding residues include Arg116, Asp159, Arg162, Arg165, and Arg168. Positions 116, 159, 162, 165, and 168 each coordinate CTP.

Belongs to the tRNA nucleotidyltransferase/poly(A) polymerase family. Bacterial CCA-adding enzyme type 3 subfamily. As to quaternary structure, homodimer. Mg(2+) serves as cofactor.

The enzyme catalyses a tRNA precursor + 2 CTP + ATP = a tRNA with a 3' CCA end + 3 diphosphate. The catalysed reaction is a tRNA with a 3' CCA end + 2 CTP + ATP = a tRNA with a 3' CCACCA end + 3 diphosphate. Functionally, catalyzes the addition and repair of the essential 3'-terminal CCA sequence in tRNAs without using a nucleic acid template. Adds these three nucleotides in the order of C, C, and A to the tRNA nucleotide-73, using CTP and ATP as substrates and producing inorganic pyrophosphate. tRNA 3'-terminal CCA addition is required both for tRNA processing and repair. Also involved in tRNA surveillance by mediating tandem CCA addition to generate a CCACCA at the 3' terminus of unstable tRNAs. While stable tRNAs receive only 3'-terminal CCA, unstable tRNAs are marked with CCACCA and rapidly degraded. The sequence is that of CCA-adding enzyme from Lactobacillus johnsonii (strain CNCM I-12250 / La1 / NCC 533).